Consider the following 478-residue polypeptide: Early growth response protein 4 (478 aa).

Residues 275 to 302 (TEGLPALLTPPGGEGGSGGEGGEFLAAP) form a disordered region. The span at 286–296 (GGEGGSGGEGG) shows a compositional bias: gly residues. 3 consecutive C2H2-type zinc fingers follow at residues 372–396 (FACP…LRIH), 402–424 (FQCR…VRTH), and 430–452 (FACD…SKVH).

It belongs to the EGR C2H2-type zinc-finger protein family.

It localises to the nucleus. Transcriptional regulator. Recognizes and binds to the DNA sequence 5'-GCGGGGGCG-3' (GSG). Activates the transcription of target genes whose products are required for mitogenesis and differentiation. This chain is Early growth response protein 4 (Egr4), found in Mus musculus (Mouse).